A 215-amino-acid chain; its full sequence is Somatotropin (215 aa).

The signal sequence occupies residues 1–25 (MAPGARISLLLLITFTLLGPQRSGA). His44 is a Zn(2+) binding site. The cysteines at positions 77 and 188 are disulfide-linked. A Phosphoserine modification is found at Ser130. Residue Glu197 coordinates Zn(2+). Cys205 and Cys213 are oxidised to a cystine.

This sequence belongs to the somatotropin/prolactin family.

Its subcellular location is the secreted. Its function is as follows. Plays an important role in growth control. Its major role in stimulating body growth is to stimulate the liver and other tissues to secrete IGF1. It stimulates both the differentiation and proliferation of myoblasts. It also stimulates amino acid uptake and protein synthesis in muscle and other tissues. This is Somatotropin (GH1) from Trichosurus vulpecula (Brush-tailed possum).